Here is a 412-residue protein sequence, read N- to C-terminus: Inositol polyphosphate-5-phosphatase A (412 aa).

Residue C409 is the site of S-farnesyl cysteine attachment. Positions 410 to 412 are cleaved as a propeptide — removed in mature form; the sequence is VVQ.

It belongs to the inositol 1,4,5-trisphosphate 5-phosphatase type I family. As to quaternary structure, interacts with TASOR. Isoprenylation at Cys-409 is required for localization at the membrane. In terms of tissue distribution, predominantly expressed in heart, brain, and skeletal muscle. In brain; high level in Purkinje cells.

The protein localises to the cell membrane. Its subcellular location is the cell projection. It localises to the dendrite. The enzyme catalyses 1D-myo-inositol 1,4,5-trisphosphate + H2O = 1D-myo-inositol 1,4-bisphosphate + phosphate. The catalysed reaction is 1D-myo-inositol 1,3,4,5-tetrakisphosphate + H2O = 1D-myo-inositol 1,3,4-trisphosphate + phosphate. Phosphatase that specifically hydrolyzes the 5-phosphate of inositol 1,4,5-trisphosphate to inositol 1,4-bisphosphate, and inositol 1,3,4,5-tetrasphosphate to inositol 1,3,4-trisphosphate. Plays a crucial role in the survival of cerebellar Purkinje cells. This chain is Inositol polyphosphate-5-phosphatase A, found in Homo sapiens (Human).